The chain runs to 704 residues: Nucleolar and coiled-body phosphoprotein 1 (704 aa).

The LisH domain occupies 10–42 (VPSDLYPLVLGFLRDNQLSEVASKFAKATGATQ). At K33 the chain carries N6-acetyllysine. A disordered region spans residues 65 to 638 (KVKLQSNGPV…PFRRVREEEI (574 aa)). Residues K67 and K76 each participate in a glycyl lysine isopeptide (Lys-Gly) (interchain with G-Cter in SUMO2) cross-link. Acidic serine cluster repeat units lie at residues 84–95 (SSDSSEDSSEEE) and 127–138 (ESSSSEESSEEE). The 11 X 12 AA approximate repeats of an acidic serine cluster stretch occupies residues 84–570 (SSDSSEDSSE…GKAGKESEEE (487 aa)). A phosphoserine mark is found at S87, S88, S91, and S92. The segment covering 87-96 (SSEDSSEEED) has biased composition (acidic residues). Diphosphoserine is present on residues S88 and S91. 2 stretches are compositionally biased toward low complexity: residues 120 to 132 (KAAAKASESSSSE) and 149 to 160 (QQKAVKPQAKAV). One copy of the Acidic serine cluster 3 repeat lies at 170–181 (SESESDSSSEDE). Acidic residues predominate over residues 170–182 (SESESDSSSEDEA). Low complexity-rich tracts occupy residues 183-207 (PQTQKPKAAATAAKAPTKAQTKAPA), 215-236 (AQPKAANGKAGSSSSSSSSSSS), and 246-279 (AAPLKKTAPKKQVVAKAPVKVTAAPTQKSSSSED). Glycyl lysine isopeptide (Lys-Gly) (interchain with G-Cter in SUMO2) cross-links involve residues K189 and K200. Acidic serine cluster repeat units follow at residues 231–242 (SSSSSSDDSEEE), 274–285 (SSSSEDSSSEEE), and 335–346 (SSEESDSSSEEE). Residues K352 and K357 each participate in a glycyl lysine isopeptide (Lys-Gly) (interchain with G-Cter in SUMO2) cross-link. 3 positions are modified to phosphoserine: S372, S373, and S376. The stretch at 373–384 (SDSSDSDSSEDE) is one Acidic serine cluster 7 repeat. Residues K399, K405, K410, and K416 each participate in a glycyl lysine isopeptide (Lys-Gly) (interchain with G-Cter in SUMO2) cross-link. Positions 408–419 (AAKAVATPKQPA) are enriched in low complexity. K424 bears the N6-acetyllysine; alternate mark. A Glycyl lysine isopeptide (Lys-Gly) (interchain with G-Cter in SUMO1); alternate cross-link involves residue K424. K424 participates in a covalent cross-link: Glycyl lysine isopeptide (Lys-Gly) (interchain with G-Cter in SUMO2); alternate. A compositionally biased stretch (acidic residues) spans 434–444 (SSEEESSSSEE). The stretch at 434 to 445 (SSEEESSSSEEE) is one Acidic serine cluster 8 repeat. Glycyl lysine isopeptide (Lys-Gly) (interchain with G-Cter in SUMO2) cross-links involve residues K449 and K461. At S465 the chain carries Phosphoserine. Composition is skewed to low complexity over residues 474-485 (AGGDSSSDSESS) and 504-529 (AGAAVPKPTPVKKAAAESSSSSSSSE). The stretch at 479 to 490 (SSDSESSSSEEE) is one Acidic serine cluster 9 repeat. K510 is covalently cross-linked (Glycyl lysine isopeptide (Lys-Gly) (interchain with G-Cter in SUMO2)). Acidic serine cluster repeat units follow at residues 524 to 535 (SSSSSEDSSEEE) and 559 to 570 (QNGKAGKESEEE). At S567 the chain carries Phosphoserine. K584 is covalently cross-linked (Glycyl lysine isopeptide (Lys-Gly) (interchain with G-Cter in SUMO2)). S587 carries the phosphoserine modification. At T596 the chain carries Phosphothreonine. K609 is covalently cross-linked (Glycyl lysine isopeptide (Lys-Gly) (interchain with G-Cter in SUMO2)). A phosphothreonine mark is found at T612 and T615. K618 is covalently cross-linked (Glycyl lysine isopeptide (Lys-Gly) (interchain with G-Cter in SUMO2)). Residues S627 and S648 each carry the phosphoserine modification. Residue K652 forms a Glycyl lysine isopeptide (Lys-Gly) (interchain with G-Cter in SUMO2) linkage. N6-acetyllysine; alternate is present on K668. Residue K668 forms a Glycyl lysine isopeptide (Lys-Gly) (interchain with G-Cter in SUMO2); alternate linkage. Omega-N-methylarginine is present on R688. Phosphoserine is present on S691. K700 participates in a covalent cross-link: Glycyl lysine isopeptide (Lys-Gly) (interchain with G-Cter in SUMO2). S703 carries the phosphoserine modification.

Belongs to the NOLC1 family. Interacts with RNA polymerase I 194 kDa subunit (RPA194) and with casein kinase-II. Interacts with DKC1/NAP57, NOP58 and fibrillarin. In terms of processing, undergoes rapid and massive phosphorylation/dephosphorylation cycles on CK2 and PKC sites. NOLC1 is one of the mostly phosphorylated proteins in the cell. Ubiquitinated. Monoubiquitination by the BCR(KBTBD8) complex promotes the formation of a NOLC1-TCOF1 complex that acts as a platform to connect RNA polymerase I with enzymes responsible for ribosomal processing and modification, leading to remodel the translational program of differentiating cells in favor of neural crest specification. Post-translationally, pyrophosphorylated by 5-diphosphoinositol pentakisphosphate (5-IP7). Serine pyrophosphorylation is achieved by Mg(2+)-dependent, but enzyme independent transfer of a beta-phosphate from a inositol pyrophosphate to a pre-phosphorylated serine residue.

Its subcellular location is the cytoplasm. The protein resides in the nucleus. It localises to the nucleolus. In terms of biological role, nucleolar protein that acts as a regulator of RNA polymerase I by connecting RNA polymerase I with enzymes responsible for ribosomal processing and modification. Required for neural crest specification: following monoubiquitination by the BCR(KBTBD8) complex, associates with TCOF1 and acts as a platform to connect RNA polymerase I with enzymes responsible for ribosomal processing and modification, leading to remodel the translational program of differentiating cells in favor of neural crest specification. Involved in nucleologenesis, possibly by playing a role in the maintenance of the fundamental structure of the fibrillar center and dense fibrillar component in the nucleolus. It has intrinsic GTPase and ATPase activities. The sequence is that of Nucleolar and coiled-body phosphoprotein 1 from Rattus norvegicus (Rat).